The primary structure comprises 683 residues: Multidrug resistance protein MdtO (683 aa).

9 helical membrane passes run valine 43–phenylalanine 63, phenylalanine 75–tyrosine 95, glycine 100–methionine 120, leucine 125–methionine 145, tryptophan 158–phenylalanine 178, phenylalanine 402–tryptophan 422, isoleucine 426–serine 446, methionine 457–valine 477, and alanine 483–glutamate 503.

The protein belongs to the MdtO family. Could be part of a tripartite efflux system composed of MdtN, MdtO and MdtP.

Its subcellular location is the cell inner membrane. Could be involved in resistance to puromycin, acriflavine and tetraphenylarsonium chloride. This is Multidrug resistance protein MdtO (mdtO) from Escherichia coli (strain K12).